We begin with the raw amino-acid sequence, 382 residues long: uncharacterized protein (382 aa).

12 helical membrane-spanning segments follow: residues 14 to 34 (GLLLLTLAIAVLNTLVLLWLA), 45 to 65 (MVSSSYFTGNLVGTLFTGYLI), 75 to 95 (YLASLIFAAGCVGLGVMVGFW), 102 to 122 (FIAGIGCAMIWVVVESALMCS), 131 to 151 (LLAAYMMVYYMGTFLGQLLVS), 157 to 177 (LLHVLPWVTGMILAGILPLLF), 204 to 224 (LGVNGCIISGIVLGSLYGLMP), 231 to 251 (GMANASIGFWMAVLVSAGILG), 270 to 290 (VQVFVVILGSIAMLTQAAMAP), 291 to 311 (ALFILGAAGFTLYPVAMAWAC), 325 to 345 (ALLLSYTVGSLLGPSFAAMLM), and 349 to 369 (SDNLLFIMIASVSFIYLLMLL).

This sequence belongs to the major facilitator superfamily. YcaD (TC 2.A.1.26) family.

The protein resides in the cell inner membrane. This is an uncharacterized protein from Salmonella paratyphi A (strain ATCC 9150 / SARB42).